The sequence spans 389 residues: Chalcone synthase 2 (389 aa).

55 to 62 serves as a coordination point for CoA; sequence KFQRMCDK. Residue Cys-164 is the Acyl-thioester intermediate of the active site. Substrate-binding positions include Thr-197 and 216-217; that span reads GD. Ala-308 is a CoA binding site.

It belongs to the thiolase-like superfamily. Chalcone/stilbene synthases family. In terms of assembly, homodimer.

It carries out the reaction (E)-4-coumaroyl-CoA + 3 malonyl-CoA + 3 H(+) = 2',4,4',6'-tetrahydroxychalcone + 3 CO2 + 4 CoA. It functions in the pathway secondary metabolite biosynthesis; flavonoid biosynthesis. The primary product of this enzyme is 4,2',4',6'-tetrahydroxychalcone (also termed naringenin-chalcone or chalcone) which can under specific conditions spontaneously isomerize into naringenin. This is Chalcone synthase 2 (CHS2) from Medicago sativa (Alfalfa).